We begin with the raw amino-acid sequence, 402 residues long: LIM/homeobox protein Lhx5 (402 aa).

2 LIM zinc-binding domains span residues 3-61 (AHCA…RRFG) and 62-125 (TKCA…ASSL). Disordered regions lie at residues 133–187 (VSSC…RTTI), 291–335 (NYDF…GHHP), and 365–392 (SGEV…LPHQ). Basic and acidic residues predominate over residues 151–167 (DESKETDHSTSSDKETA). The homeobox DNA-binding region spans 180 to 239 (RRGPRTTIKAKQLETLKAAFIATPKPTRHIREQLAQETGLNMRVIQVWFQNRRSKERRMK). Residues 300 to 319 (PSSQTQSPADSSYLQNSGPG) are compositionally biased toward polar residues.

In terms of assembly, interacts with ldb1 and with the N-terminus of rnf12.

Its subcellular location is the nucleus. In terms of biological role, probably involved in the patterning of the nervous system, in particular in the early specification of the diencephalon. This chain is LIM/homeobox protein Lhx5 (lhx5), found in Xenopus laevis (African clawed frog).